We begin with the raw amino-acid sequence, 306 residues long: Pantothenate kinase (306 aa).

Glycine 91–serine 98 lines the ATP pocket.

Belongs to the prokaryotic pantothenate kinase family.

The protein localises to the cytoplasm. It catalyses the reaction (R)-pantothenate + ATP = (R)-4'-phosphopantothenate + ADP + H(+). It participates in cofactor biosynthesis; coenzyme A biosynthesis; CoA from (R)-pantothenate: step 1/5. The protein is Pantothenate kinase of Streptococcus mutans serotype c (strain ATCC 700610 / UA159).